The sequence spans 204 residues: Ciliary microtubule inner protein 7 (204 aa).

The protein resides in the cell projection. It is found in the cilium. The polypeptide is Ciliary microtubule inner protein 7 (Homo sapiens (Human)).